A 236-amino-acid chain; its full sequence is Small ribosomal subunit protein uS2c (236 aa).

It belongs to the universal ribosomal protein uS2 family.

It is found in the plastid. The protein resides in the chloroplast. The polypeptide is Small ribosomal subunit protein uS2c (rps2) (Nicotiana tabacum (Common tobacco)).